Consider the following 339-residue polypeptide: Anthranilate phosphoribosyltransferase (339 aa).

5-phospho-alpha-D-ribose 1-diphosphate is bound by residues Gly-80, 83–84 (GD), Thr-88, 90–93 (NIST), 108–116 (KHGNRSVSS), and Ser-120. Gly-80 contributes to the anthranilate binding site. Ser-92 contributes to the Mg(2+) binding site. Position 111 (Asn-111) interacts with anthranilate. Arg-166 is an anthranilate binding site. 2 residues coordinate Mg(2+): Asp-225 and Glu-226.

Belongs to the anthranilate phosphoribosyltransferase family. In terms of assembly, homodimer. It depends on Mg(2+) as a cofactor.

It catalyses the reaction N-(5-phospho-beta-D-ribosyl)anthranilate + diphosphate = 5-phospho-alpha-D-ribose 1-diphosphate + anthranilate. The protein operates within amino-acid biosynthesis; L-tryptophan biosynthesis; L-tryptophan from chorismate: step 2/5. Its function is as follows. Catalyzes the transfer of the phosphoribosyl group of 5-phosphorylribose-1-pyrophosphate (PRPP) to anthranilate to yield N-(5'-phosphoribosyl)-anthranilate (PRA). This Moorella thermoacetica (strain ATCC 39073 / JCM 9320) protein is Anthranilate phosphoribosyltransferase.